The following is a 238-amino-acid chain: uncharacterized protein (238 aa).

3 consecutive transmembrane segments (helical) span residues 75 to 95, 116 to 136, and 172 to 192; these read YAIF…HNFY, IVLI…FSLI, and IQGL…LEVI. Residues 200–238 are disordered; it reads DVEMSSMRGQAITTEPASDNTMAEETDCNTSKDVESGSN. The segment covering 206-220 has biased composition (polar residues); the sequence is MRGQAITTEPASDNT. A compositionally biased stretch (basic and acidic residues) spans 229 to 238; the sequence is TSKDVESGSN.

Its subcellular location is the membrane. This is an uncharacterized protein from Schizosaccharomyces pombe (strain 972 / ATCC 24843) (Fission yeast).